A 96-amino-acid chain; its full sequence is Co-chaperonin GroES (96 aa).

The protein belongs to the GroES chaperonin family. Heptamer of 7 subunits arranged in a ring. Interacts with the chaperonin GroEL.

It localises to the cytoplasm. In terms of biological role, together with the chaperonin GroEL, plays an essential role in assisting protein folding. The GroEL-GroES system forms a nano-cage that allows encapsulation of the non-native substrate proteins and provides a physical environment optimized to promote and accelerate protein folding. GroES binds to the apical surface of the GroEL ring, thereby capping the opening of the GroEL channel. The chain is Co-chaperonin GroES from Alteromonas mediterranea (strain DSM 17117 / CIP 110805 / LMG 28347 / Deep ecotype).